A 450-amino-acid polypeptide reads, in one-letter code: Tubulin alpha-3 chain (450 aa).

A GTP-binding site is contributed by glutamine 11. Lysine 40 is modified (N6-acetyllysine). GTP-binding residues include glutamate 71, glycine 144, threonine 145, threonine 179, asparagine 206, and asparagine 228. Glutamate 71 is a Mg(2+) binding site. Glutamate 254 is an active-site residue.

Belongs to the tubulin family. In terms of assembly, dimer of alpha and beta chains. A typical microtubule is a hollow water-filled tube with an outer diameter of 25 nm and an inner diameter of 15 nM. Alpha-beta heterodimers associate head-to-tail to form protofilaments running lengthwise along the microtubule wall with the beta-tubulin subunit facing the microtubule plus end conferring a structural polarity. Microtubules usually have 13 protofilaments but different protofilament numbers can be found in some organisms and specialized cells. Requires Mg(2+) as cofactor. In terms of processing, undergoes a tyrosination/detyrosination cycle, the cyclic removal and re-addition of a C-terminal tyrosine residue by the enzymes tubulin tyrosine carboxypeptidase (TTCP) and tubulin tyrosine ligase (TTL), respectively. Post-translationally, acetylation of alpha chains at Lys-40 stabilizes microtubules and affects affinity and processivity of microtubule motors. This modification has a role in multiple cellular functions, ranging from cell motility, cell cycle progression or cell differentiation to intracellular trafficking and signaling.

The protein localises to the cytoplasm. Its subcellular location is the cytoskeleton. The enzyme catalyses GTP + H2O = GDP + phosphate + H(+). Its function is as follows. Tubulin is the major constituent of microtubules, a cylinder consisting of laterally associated linear protofilaments composed of alpha- and beta-tubulin heterodimers. Microtubules grow by the addition of GTP-tubulin dimers to the microtubule end, where a stabilizing cap forms. Below the cap, tubulin dimers are in GDP-bound state, owing to GTPase activity of alpha-tubulin. This is Tubulin alpha-3 chain (TUBA3) from Zea mays (Maize).